Consider the following 643-residue polypeptide: tRNA 5-methylaminomethyl-2-thiouridine biosynthesis bifunctional protein MnmC (643 aa).

A tRNA (mnm(5)s(2)U34)-methyltransferase region spans residues 1–223 (MPDRLVSATL…VDDRLVGDYA (223 aa)). Residues 247 to 643 (IGAGLAGCAV…LRARRVGSAG (397 aa)) are FAD-dependent cmnm(5)s(2)U34 oxidoreductase.

It in the N-terminal section; belongs to the methyltransferase superfamily. tRNA (mnm(5)s(2)U34)-methyltransferase family. This sequence in the C-terminal section; belongs to the DAO family. FAD serves as cofactor.

Its subcellular location is the cytoplasm. It carries out the reaction 5-aminomethyl-2-thiouridine(34) in tRNA + S-adenosyl-L-methionine = 5-methylaminomethyl-2-thiouridine(34) in tRNA + S-adenosyl-L-homocysteine + H(+). Functionally, catalyzes the last two steps in the biosynthesis of 5-methylaminomethyl-2-thiouridine (mnm(5)s(2)U) at the wobble position (U34) in tRNA. Catalyzes the FAD-dependent demodification of cmnm(5)s(2)U34 to nm(5)s(2)U34, followed by the transfer of a methyl group from S-adenosyl-L-methionine to nm(5)s(2)U34, to form mnm(5)s(2)U34. In Burkholderia orbicola (strain AU 1054), this protein is tRNA 5-methylaminomethyl-2-thiouridine biosynthesis bifunctional protein MnmC.